Consider the following 44-residue polypeptide: MSQTMSKNNREAKEKKGQPEPLSGSHKVKNRNHSRQKHHAHHDM.

A disordered region spans residues 1-44 (MSQTMSKNNREAKEKKGQPEPLSGSHKVKNRNHSRQKHHAHHDM). Positions 8–18 (NNREAKEKKGQ) are enriched in basic and acidic residues. The span at 26-44 (HKVKNRNHSRQKHHAHHDM) shows a compositional bias: basic residues.

It belongs to the SspP family.

The protein localises to the spore core. This chain is Small, acid-soluble spore protein P, found in Bacillus cereus (strain ATCC 10987 / NRS 248).